A 502-amino-acid polypeptide reads, in one-letter code: Glycerol kinase (502 aa).

An ADP-binding site is contributed by threonine 13. ATP-binding residues include threonine 13, threonine 14, and serine 15. Residue threonine 13 coordinates sn-glycerol 3-phosphate. Residue arginine 17 participates in ADP binding. Residues arginine 83, glutamate 84, tyrosine 136, and aspartate 246 each coordinate sn-glycerol 3-phosphate. Glycerol-binding residues include arginine 83, glutamate 84, tyrosine 136, aspartate 246, and glutamine 247. ADP-binding residues include threonine 268 and glycine 311. ATP-binding residues include threonine 268, glycine 311, glutamine 315, and glycine 412. ADP contacts are provided by glycine 412 and asparagine 416.

The protein belongs to the FGGY kinase family.

The enzyme catalyses glycerol + ATP = sn-glycerol 3-phosphate + ADP + H(+). It functions in the pathway polyol metabolism; glycerol degradation via glycerol kinase pathway; sn-glycerol 3-phosphate from glycerol: step 1/1. With respect to regulation, inhibited by fructose 1,6-bisphosphate (FBP). In terms of biological role, key enzyme in the regulation of glycerol uptake and metabolism. Catalyzes the phosphorylation of glycerol to yield sn-glycerol 3-phosphate. The sequence is that of Glycerol kinase from Francisella tularensis subsp. tularensis (strain FSC 198).